The following is a 351-amino-acid chain: Dihydroorotate dehydrogenase (quinone) (351 aa).

FMN contacts are provided by residues 67-71 (AGFDK) and Thr91. Lys71 is a binding site for substrate. 116–120 (NAMGF) is a substrate binding site. Asn145 and Asn178 together coordinate FMN. Asn178 is a substrate binding site. Ser181 serves as the catalytic Nucleophile. Asn183 contributes to the substrate binding site. FMN-binding residues include Lys214 and Thr242. A substrate-binding site is contributed by 243–244 (NT). FMN is bound by residues Gly262, Gly291, and 312–313 (YS).

This sequence belongs to the dihydroorotate dehydrogenase family. Type 2 subfamily. Monomer. The cofactor is FMN.

It localises to the cell membrane. The enzyme catalyses (S)-dihydroorotate + a quinone = orotate + a quinol. The protein operates within pyrimidine metabolism; UMP biosynthesis via de novo pathway; orotate from (S)-dihydroorotate (quinone route): step 1/1. Its function is as follows. Catalyzes the conversion of dihydroorotate to orotate with quinone as electron acceptor. In Helicobacter acinonychis (strain Sheeba), this protein is Dihydroorotate dehydrogenase (quinone).